An 819-amino-acid chain; its full sequence is Probable beta-glucosidase G (819 aa).

The N-terminal stretch at 1–20 is a signal peptide; sequence MTSASQILVWGLLAASGAQA. Residues asparagine 41, asparagine 59, asparagine 107, asparagine 228, and asparagine 277 are each glycosylated (N-linked (GlcNAc...) asparagine). Residue aspartate 305 is part of the active site. N-linked (GlcNAc...) asparagine glycosylation is found at asparagine 337, asparagine 344, asparagine 351, asparagine 403, asparagine 500, asparagine 509, asparagine 554, asparagine 567, asparagine 588, asparagine 627, asparagine 683, and asparagine 719.

Belongs to the glycosyl hydrolase 3 family.

It localises to the secreted. It catalyses the reaction Hydrolysis of terminal, non-reducing beta-D-glucosyl residues with release of beta-D-glucose.. It participates in glycan metabolism; cellulose degradation. Its function is as follows. Beta-glucosidases are one of a number of cellulolytic enzymes involved in the degradation of cellulosic biomass. Catalyzes the last step releasing glucose from the inhibitory cellobiose. This Emericella nidulans (strain FGSC A4 / ATCC 38163 / CBS 112.46 / NRRL 194 / M139) (Aspergillus nidulans) protein is Probable beta-glucosidase G (bglG).